A 62-amino-acid chain; its full sequence is Conotoxin Pn-014 (62 aa).

Positions 1–22 (MRCLPVFVILLLLIASAPSVDA) are cleaved as a signal peptide. Positions 23–48 (RPKTKDDIPLVSFQDHAKRILQTFES) are excised as a propeptide. Tryptophan 61 carries the tryptophan amide modification.

It belongs to the conotoxin T superfamily. Post-translationally, contains 2 disulfide bonds that can be either 'C1-C3, C2-C4' or 'C1-C4, C2-C3', since these disulfide connectivities have been observed for conotoxins with cysteine framework V (for examples, see AC P0DQQ7 and AC P81755). In terms of tissue distribution, expressed by the venom duct.

It localises to the secreted. The polypeptide is Conotoxin Pn-014 (Conus pennaceus (Feathered cone)).